A 574-amino-acid chain; its full sequence is Septation ring formation regulator EzrA (574 aa).

The Extracellular segment spans residues 1–7; sequence MSSGIIL. Residues 8–26 form a helical membrane-spanning segment; that stretch reads LIVAIVLLVIIAYLVGVII. Residues 27–574 lie on the Cytoplasmic side of the membrane; sequence RKRNDSLITS…YEKTREHIRF (548 aa). Coiled coils occupy residues 102–141, 274–350, and 459–520; these read NFIR…EEKN, ELVT…ETES, and QLEA…SFEA.

It belongs to the EzrA family.

It localises to the cell membrane. Its function is as follows. Negative regulator of FtsZ ring formation; modulates the frequency and position of FtsZ ring formation. Inhibits FtsZ ring formation at polar sites. Interacts either with FtsZ or with one of its binding partners to promote depolymerization. This chain is Septation ring formation regulator EzrA, found in Streptococcus pyogenes serotype M6 (strain ATCC BAA-946 / MGAS10394).